A 902-amino-acid chain; its full sequence is Transcription factor E2F7 (902 aa).

Serine 96 bears the Phosphoserine mark. Residues 143–212 (RKQKSLGLLC…VAKNQYGWHG (70 aa)) mediate DNA binding. The span at 253–269 (ERRKDGSPDPRDQHLLD) shows a compositional bias: basic and acidic residues. Positions 253–283 (ERRKDGSPDPRDQHLLDFSESDYPSSSANSR) are disordered. The DNA-binding element occupies 283-368 (RKDKSLRIMS…GRKPAFKWIG (86 aa)). At serine 411 the chain carries Phosphoserine. Disordered stretches follow at residues 418 to 439 (SEKI…KQGP), 589 to 627 (LCEE…SNST), and 665 to 690 (NGFI…DNEI). 2 stretches are compositionally biased toward basic and acidic residues: residues 589–611 (LCEE…REFE) and 679–690 (PDTEKSSNDNEI). Serine 832 carries the post-translational modification Phosphoserine. A disordered region spans residues 844-902 (KAEQSPAPATPKSIQRRHRETFFKTPGSLGDPAFRRERNQSRNTSSAQRRLEISSSGPD). Positions 884 to 902 (SRNTSSAQRRLEISSSGPD) are enriched in polar residues.

Belongs to the E2F/DP family. As to quaternary structure, homodimer and heterodimer: mainly forms homodimers and, to a lesser extent, heterodimers with E2F8. Dimerization is important for DNA-binding. Interacts with HIF1A. Interacts with MN1.

The protein resides in the nucleus. In terms of biological role, atypical E2F transcription factor that participates in various processes such as angiogenesis, polyploidization of specialized cells and DNA damage response. Mainly acts as a transcription repressor that binds DNA independently of DP proteins and specifically recognizes the E2 recognition site 5'-TTTC[CG]CGC-3'. Directly represses transcription of classical E2F transcription factors such as E2F1. Acts as a regulator of S-phase by recognizing and binding the E2-related site 5'-TTCCCGCC-3' and mediating repression of G1/S-regulated genes. Plays a key role in polyploidization of cells in placenta and liver by regulating the endocycle, probably by repressing genes promoting cytokinesis and antagonizing action of classical E2F proteins (E2F1, E2F2 and/or E2F3). Required for placental development by promoting polyploidization of trophoblast giant cells. Also involved in DNA damage response: up-regulated by p53/TP53 following genotoxic stress and acts as a downstream effector of p53/TP53-dependent repression by mediating repression of indirect p53/TP53 target genes involved in DNA replication. Acts as a promoter of sprouting angiogenesis, possibly by acting as a transcription activator: associates with HIF1A, recognizes and binds the VEGFA promoter, which is different from canonical E2 recognition site, and activates expression of the VEGFA gene. Acts as a negative regulator of keratinocyte differentiation. This chain is Transcription factor E2F7 (E2f7), found in Rattus norvegicus (Rat).